A 336-amino-acid polypeptide reads, in one-letter code: Dihydroorotate dehydrogenase (quinone) (336 aa).

FMN is bound by residues 62-66 and Thr-86; that span reads AGLDK. Lys-66 lines the substrate pocket. 111-115 contributes to the substrate binding site; the sequence is NRMGF. FMN is bound by residues Asn-139 and Asn-172. Substrate is bound at residue Asn-172. Ser-175 acts as the Nucleophile in catalysis. Residue Asn-177 coordinates substrate. FMN contacts are provided by Lys-217 and Thr-245. Substrate is bound at residue 246-247; it reads NT. FMN contacts are provided by residues Gly-268, Gly-297, and 318–319; that span reads YS.

The protein belongs to the dihydroorotate dehydrogenase family. Type 2 subfamily. As to quaternary structure, monomer. FMN serves as cofactor.

Its subcellular location is the cell membrane. It catalyses the reaction (S)-dihydroorotate + a quinone = orotate + a quinol. The protein operates within pyrimidine metabolism; UMP biosynthesis via de novo pathway; orotate from (S)-dihydroorotate (quinone route): step 1/1. In terms of biological role, catalyzes the conversion of dihydroorotate to orotate with quinone as electron acceptor. The sequence is that of Dihydroorotate dehydrogenase (quinone) from Pectobacterium atrosepticum (strain SCRI 1043 / ATCC BAA-672) (Erwinia carotovora subsp. atroseptica).